We begin with the raw amino-acid sequence, 1270 residues long: Myosin-binding protein C, cardiac-type (1270 aa).

Position 1 is an N-acetylmethionine (M1). Residues 1-24 are disordered; sequence MPEPGKKPVSAFNKKPRSAEVTAG. Phosphoserine occurs at positions 47 and 72. Residues 94–105 show a composition bias toward basic and acidic residues; that stretch reads VTEPAPPEKAES. The disordered stretch occupies residues 94–152; it reads VTEPAPPEKAESEVAPGAPEEVPAPATELEESVSSPEGSVSVTQDGSAAEHQGAPDDPI. Over residues 106 to 135 the composition is skewed to low complexity; sequence EVAPGAPEEVPAPATELEESVSSPEGSVSV. Residues 151 to 254 form the Ig-like C2-type 1 domain; that stretch reads PIGLFLMRPQ…FDSCNFNLTV (104 aa). Q206, H208, E221, and H223 together coordinate Zn(2+). Phosphoserine; by PKA and PKC occurs at positions 273, 282, and 302. Residues S307 and S423 each carry the phosphoserine modification. 4 consecutive Ig-like C2-type domains span residues 358 to 448, 449 to 539, 540 to 629, and 641 to 767; these read STAF…VKEP, PVLI…VQEK, KLEV…HFME, and PKIH…VIDV. C432 and C439 are disulfide-bonded. Phosphoserine occurs at positions 455 and 546. At T603 the chain carries Phosphothreonine. The disordered stretch occupies residues 683–702; it reads VTQGKKASAGPHPDAPEDAG. Fibronectin type-III domains lie at 770-866 and 868-963; these read APAA…IGPP and EPTH…VQEI. Residues 967–1061 enclose the Ig-like C2-type 6 domain; the sequence is PRLQLPRHLR…ATLILQIVDK (95 aa). The region spanning 1064-1159 is the Fibronectin type-III 3 domain; sequence PPQDIRIVET…TKEPVFIPRP (96 aa). The Ig-like C2-type 7 domain maps to 1177–1270; it reads PSFTQPLANR…ECRLEVRVPQ (94 aa). R1237 carries the omega-N-methylarginine modification.

This sequence belongs to the immunoglobulin superfamily. MyBP family. In terms of processing, substrate for phosphorylation by PKA and PKC. Reversible phosphorylation appears to modulate contraction. Post-translationally, polyubiquitinated.

In terms of biological role, thick filament-associated protein located in the crossbridge region of vertebrate striated muscle a bands. In vitro it binds MHC, F-actin and native thin filaments, and modifies the activity of actin-activated myosin ATPase. It may modulate muscle contraction or may play a more structural role. This chain is Myosin-binding protein C, cardiac-type (Mybpc3), found in Mus musculus (Mouse).